We begin with the raw amino-acid sequence, 331 residues long: Centriolar satellite-associated tubulin polyglutamylase complex regulator 1 (331 aa).

Residues 1-111 form a required for interaction with PCM1 region; it reads MLSPERLALP…HCLLQLLCPD (111 aa). Positions 1–225 are required for interaction with TPGS1, LRRC49, and TTLL1; sequence MLSPERLALP…SCPPPALVKE (225 aa). Residues 112–331 are required for interaction with TPGS2; sequence FPLELTQKAA…STEETDESET (220 aa). A disordered region spans residues 292-331; sequence SCLPSRTPPRVGSPWKPLHRSRKLDAESDGSTEETDESET. A compositionally biased stretch (acidic residues) spans 318-331; it reads ESDGSTEETDESET. Serine 319 carries the phosphoserine modification.

This sequence belongs to the CSTPP1 family. Interacts with PCM1. Interacts with TTLL1, TPGS1, TPGS2 and LRRC49; the interactions link CSTPP1 to the complex TPGC. Binds to alpha-tubulin.

It is found in the cytoplasm. It localises to the cytoskeleton. The protein resides in the microtubule organizing center. The protein localises to the centrosome. Its subcellular location is the centriolar satellite. In terms of biological role, regulator of the tubulin polyglutamylase complex (TPGC) that controls cytoskeletal organization, nuclear shape, and cilium disassembly by balancing microtubule and actin assembly. Regulates the assembly and stability of the TPGC and thereby modulates polyglutamylation of the microtubule, which antagonizes MAP4 binding. In Rattus norvegicus (Rat), this protein is Centriolar satellite-associated tubulin polyglutamylase complex regulator 1 (Cstpp1).